The chain runs to 265 residues: tRNA pseudouridine synthase A (265 aa).

Asp-53 (nucleophile) is an active-site residue. Substrate is bound at residue Tyr-111.

This sequence belongs to the tRNA pseudouridine synthase TruA family. In terms of assembly, homodimer.

The catalysed reaction is uridine(38/39/40) in tRNA = pseudouridine(38/39/40) in tRNA. Functionally, formation of pseudouridine at positions 38, 39 and 40 in the anticodon stem and loop of transfer RNAs. This Acinetobacter baumannii (strain ACICU) protein is tRNA pseudouridine synthase A.